The chain runs to 100 residues: MEQALENQGPAREPFNEWTLELLEELKEEAVRHFPRPWLQACGQYIYETYGDTWEGVMAIIRILQQLLFTHYRIGCQHSRIGILPSNTRGRGRRNGSSRS.

The tract at residues 1-42 (MEQALENQGPAREPFNEWTLELLEELKEEAVRHFPRPWLQAC) is homooligomerization. Phosphoserine; by host is present on residues Ser-79, Ser-98, and Ser-100.

It belongs to the HIV-1 VPR protein family. Homooligomer, may form homodimer. Interacts with p6-gag region of the Pr55 Gag precursor protein through a (Leu-X-X)4 motif near the C-terminus of the P6gag protein. Interacts with host UNG. May interact with host RAD23A/HHR23A. Interacts with host VPRBP/DCAF1, leading to hijack the CUL4A-RBX1-DDB1-DCAF1/VPRBP complex, mediating ubiquitination of host proteins such as TERT and ZGPAT and arrest of the cell cycle in G2 phase. Post-translationally, phosphorylated on several residues by host. These phosphorylations regulate VPR activity for the nuclear import of the HIV-1 pre-integration complex.

The protein localises to the virion. It localises to the host nucleus. Its subcellular location is the host extracellular space. During virus replication, may deplete host UNG protein, and incude G2-M cell cycle arrest. Acts by targeting specific host proteins for degradation by the 26S proteasome, through association with the cellular CUL4A-DDB1 E3 ligase complex by direct interaction with host VPRPB/DCAF-1. Cell cycle arrest reportedly occurs within hours of infection and is not blocked by antiviral agents, suggesting that it is initiated by the VPR carried into the virion. Additionally, VPR induces apoptosis in a cell cycle dependent manner suggesting that these two effects are mechanistically linked. Detected in the serum and cerebrospinal fluid of AIDS patient, VPR may also induce cell death to bystander cells. Its function is as follows. During virus entry, plays a role in the transport of the viral pre-integration (PIC) complex to the host nucleus. This function is crucial for viral infection of non-dividing macrophages. May act directly at the nuclear pore complex, by binding nucleoporins phenylalanine-glycine (FG)-repeat regions. The protein is Protein Vpr of Human immunodeficiency virus type 1 group O (isolate MVP5180) (HIV-1).